Reading from the N-terminus, the 683-residue chain is Pre-mRNA-splicing factor CLF1 (683 aa).

13 HAT repeats span residues 40 to 72 (DWQR…FEYE), 74 to 106 (RDMR…CELR), 108 to 140 (RDVN…MEES), 142 to 173 (GQVE…FETR), 175 to 206 (GQVE…FERK), 291 to 323 (SILF…LLEE), 336 to 367 (ATVK…FLET), 374 to 407 (LTRS…FEIR), 409 to 440 (EKLD…LEIK), 442 to 474 (KEFD…LEEN), 476 to 513 (GDED…FETD), 515 to 547 (SEFE…YESS), and 582 to 620 (ENKE…YESI).

This sequence belongs to the crooked-neck family. As to quaternary structure, associated with the spliceosome.

It localises to the nucleus. In terms of biological role, involved in pre-mRNA splicing and cell cycle progression. Required for the spliceosome assembly and initiation of the DNA replication. The protein is Pre-mRNA-splicing factor CLF1 (CLF1) of Eremothecium gossypii (strain ATCC 10895 / CBS 109.51 / FGSC 9923 / NRRL Y-1056) (Yeast).